The chain runs to 191 residues: Small ribosomal subunit protein uS7 (191 aa).

The segment at 56-80 is disordered; the sequence is NKSGEQGDGDGESGGKAGGIKKRSL.

It belongs to the universal ribosomal protein uS7 family. As to quaternary structure, part of the 30S ribosomal subunit. Contacts proteins S9 and S11.

Functionally, one of the primary rRNA binding proteins, it binds directly to 16S rRNA where it nucleates assembly of the head domain of the 30S subunit. Is located at the subunit interface close to the decoding center, probably blocks exit of the E-site tRNA. The chain is Small ribosomal subunit protein uS7 from Coxiella burnetii (strain CbuK_Q154) (Coxiella burnetii (strain Q154)).